A 168-amino-acid polypeptide reads, in one-letter code: Disulfide bond formation protein B 1 (168 aa).

The Cytoplasmic segment spans residues 1–14 (MNELTSRLNRERRF). Residues 15–31 (LVLLGVICLALIGGALY) traverse the membrane as a helical segment. Residues 32 to 49 (MQVVLGEAPCPLCILQRY) are Periplasmic-facing. A disulfide bridge links cysteine 41 with cysteine 44. The chain crosses the membrane as a helical span at residues 50–65 (ALLFIAIFAFIAAAMP). Topologically, residues 66–72 (GRKSLTF) are cytoplasmic. A helical transmembrane segment spans residues 73–89 (FEVLVVLSAIGGIVAAG). Residues 90–144 (NHVYILANPMVSCGIDTLQPIVDDLPLAKLWPLAFQVDGFCSTPYPPILGLSLAQ) lie on the Periplasmic side of the membrane. Cysteine 102 and cysteine 130 form a disulfide bridge. Residues 145-163 (WALVAFVLTTVLVPLGIYR) traverse the membrane as a helical segment. Residues 164–168 (NRRRG) lie on the Cytoplasmic side of the membrane.

It belongs to the DsbB family.

It localises to the cell inner membrane. Functionally, required for disulfide bond formation in some periplasmic proteins. Acts by oxidizing the DsbA protein. This chain is Disulfide bond formation protein B 1, found in Pseudomonas entomophila (strain L48).